An 808-amino-acid polypeptide reads, in one-letter code: Probable inorganic carbon transporter subunit DabA (808 aa).

4 residues coordinate Zn(2+): Cys-334, Asp-336, His-494, and Cys-509.

The protein belongs to the inorganic carbon transporter (TC 9.A.2) DabA family. Forms a complex with DabB. Zn(2+) serves as cofactor.

The protein localises to the cell inner membrane. Its function is as follows. Part of an energy-coupled inorganic carbon pump. The sequence is that of Probable inorganic carbon transporter subunit DabA from Allorhizobium ampelinum (strain ATCC BAA-846 / DSM 112012 / S4) (Agrobacterium vitis (strain S4)).